The chain runs to 409 residues: Phosphatidylserine decarboxylase proenzyme, mitochondrial (409 aa).

The N-terminal 52 residues, 1–52 (MAASVCRPYVRSLPGVMPWRSSSCHYEYTAMHHFLGSFQKLPFEPFNTGARK), are a transit peptide targeting the mitochondrion. Topologically, residues 53 to 63 (IHTAPVRSLFL) are mitochondrial matrix. The chain crosses the membrane as a helical span at residues 64–82 (LRPVPILLATGGGYAGYRQ). Over 83 to 409 (YEKYRDQKLE…IRFGEALGSL (327 aa)) the chain is Mitochondrial intermembrane. Active-site charge relay system; for autoendoproteolytic cleavage activity residues include Asp191, His267, and Ser378. Ser378 acts as the Schiff-base intermediate with substrate; via pyruvic acid; for decarboxylase activity in catalysis. Position 378 is a pyruvic acid (Ser); by autocatalysis (Ser378).

The protein belongs to the phosphatidylserine decarboxylase family. PSD-B subfamily. Eukaryotic type I sub-subfamily. As to quaternary structure, heterodimer of a large membrane-associated beta subunit and a small pyruvoyl-containing alpha subunit. It depends on pyruvate as a cofactor. Post-translationally, is synthesized initially as an inactive proenzyme. Formation of the active enzyme involves a self-maturation process in which the active site pyruvoyl group is generated from an internal serine residue via an autocatalytic post-translational modification. Two non-identical subunits are generated from the proenzyme in this reaction, and the pyruvate is formed at the N-terminus of the alpha chain, which is derived from the carboxyl end of the proenzyme. The autoendoproteolytic cleavage occurs by a canonical serine protease mechanism, in which the side chain hydroxyl group of the serine supplies its oxygen atom to form the C-terminus of the beta chain, while the remainder of the serine residue undergoes an oxidative deamination to produce ammonia and the pyruvoyl prosthetic group on the alpha chain. During this reaction, the Ser that is part of the protease active site of the proenzyme becomes the pyruvoyl prosthetic group, which constitutes an essential element of the active site of the mature decarboxylase.

The protein resides in the mitochondrion inner membrane. The protein localises to the cytoplasm. It is found in the lipid droplet. It carries out the reaction a 1,2-diacyl-sn-glycero-3-phospho-L-serine + H(+) = a 1,2-diacyl-sn-glycero-3-phosphoethanolamine + CO2. Its pathway is phospholipid metabolism; phosphatidylethanolamine biosynthesis. Catalyzes the formation of phosphatidylethanolamine (PtdEtn) from phosphatidylserine (PtdSer). Plays a central role in phospholipid metabolism and in the interorganelle trafficking of phosphatidylserine. May be involved in lipid droplet biogenesis at the endoplasmic reticulum membrane. The chain is Phosphatidylserine decarboxylase proenzyme, mitochondrial from Cricetulus griseus (Chinese hamster).